The sequence spans 630 residues: DNA mismatch repair protein MutL (630 aa).

Disordered regions lie at residues Val361 to Glu386 and Phe407 to Glu431. Basic and acidic residues predominate over residues Phe407 to Ser421.

This sequence belongs to the DNA mismatch repair MutL/HexB family.

This protein is involved in the repair of mismatches in DNA. It is required for dam-dependent methyl-directed DNA mismatch repair. May act as a 'molecular matchmaker', a protein that promotes the formation of a stable complex between two or more DNA-binding proteins in an ATP-dependent manner without itself being part of a final effector complex. This is DNA mismatch repair protein MutL from Geobacillus kaustophilus (strain HTA426).